The primary structure comprises 834 residues: Membrane-associated lipoprotein (834 aa).

Residues 1–25 (MKKNKLTTLALILPITILTPIVIAS) form the signal peptide. A lipid anchor (N-palmitoyl cysteine) is attached at C26. The S-diacylglycerol cysteine moiety is linked to residue C26. Positions 143–237 (RLKDTFDFKL…LLEVSGFKSN (95 aa)) constitute a Lipoprotein-associated type-17 domain.

Its subcellular location is the cell membrane. The sequence is that of Membrane-associated lipoprotein from Ureaplasma parvum serovar 3 (strain ATCC 700970).